We begin with the raw amino-acid sequence, 100 residues long: uncharacterized protein (100 aa).

Transmembrane regions (helical) follow at residues 11 to 33 (VWSI…SVLM), 45 to 64 (WMLA…SLVY), and 68 to 90 (WEGA…GYLI).

It localises to the cell membrane. This is an uncharacterized protein from Bacillus subtilis (strain 168).